Reading from the N-terminus, the 74-residue chain is Anaphase-promoting complex subunit 13 (74 aa).

The disordered stretch occupies residues 33 to 53 (LNELPEPEQDNGGTTESVKEQ).

The protein belongs to the APC13 family. In terms of assembly, the mammalian APC/C is composed at least of 14 distinct subunits ANAPC1, ANAPC2, CDC27/APC3, ANAPC4, ANAPC5, CDC16/APC6, ANAPC7, CDC23/APC8, ANAPC10, ANAPC11, CDC26/APC12, ANAPC13, ANAPC15 and ANAPC16 that assemble into a complex of at least 19 chains with a combined molecular mass of around 1.2 MDa; APC/C interacts with FZR1 and FBXO5.

The protein localises to the nucleus. Its pathway is protein modification; protein ubiquitination. Its function is as follows. Component of the anaphase promoting complex/cyclosome (APC/C), a cell cycle-regulated E3 ubiquitin ligase that controls progression through mitosis and the G1 phase of the cell cycle. The APC/C complex acts by mediating ubiquitination and subsequent degradation of target proteins: it mainly mediates the formation of 'Lys-11'-linked polyubiquitin chains and, to a lower extent, the formation of 'Lys-48'- and 'Lys-63'-linked polyubiquitin chains. The APC/C complex catalyzes assembly of branched 'Lys-11'-/'Lys-48'-linked branched ubiquitin chains on target proteins. This is Anaphase-promoting complex subunit 13 (ANAPC13) from Bos taurus (Bovine).